The chain runs to 559 residues: Dihydroxy-acid dehydratase (559 aa).

A [2Fe-2S] cluster-binding site is contributed by Cys52. Residue Asp84 participates in Mg(2+) binding. [2Fe-2S] cluster is bound at residue Cys125. The Mg(2+) site is built by Asp126 and Lys127. N6-carboxylysine is present on Lys127. Residue Cys197 participates in [2Fe-2S] cluster binding. Glu447 is a Mg(2+) binding site. Catalysis depends on Ser473, which acts as the Proton acceptor.

It belongs to the IlvD/Edd family. As to quaternary structure, homodimer. It depends on [2Fe-2S] cluster as a cofactor. The cofactor is Mg(2+).

The catalysed reaction is (2R)-2,3-dihydroxy-3-methylbutanoate = 3-methyl-2-oxobutanoate + H2O. It carries out the reaction (2R,3R)-2,3-dihydroxy-3-methylpentanoate = (S)-3-methyl-2-oxopentanoate + H2O. It functions in the pathway amino-acid biosynthesis; L-isoleucine biosynthesis; L-isoleucine from 2-oxobutanoate: step 3/4. It participates in amino-acid biosynthesis; L-valine biosynthesis; L-valine from pyruvate: step 3/4. Functions in the biosynthesis of branched-chain amino acids. Catalyzes the dehydration of (2R,3R)-2,3-dihydroxy-3-methylpentanoate (2,3-dihydroxy-3-methylvalerate) into 2-oxo-3-methylpentanoate (2-oxo-3-methylvalerate) and of (2R)-2,3-dihydroxy-3-methylbutanoate (2,3-dihydroxyisovalerate) into 2-oxo-3-methylbutanoate (2-oxoisovalerate), the penultimate precursor to L-isoleucine and L-valine, respectively. The chain is Dihydroxy-acid dehydratase from Roseiflexus castenholzii (strain DSM 13941 / HLO8).